The primary structure comprises 559 residues: MATANIELQSAAEHEAHPTNFIRQIIDEDLATGKHHNVYTRFPPEPNGYLHIGHAKSICLNFGIAQDYHGKCNLRFDDTNPVKEDVEYVDSIKQDVEWLGFNWEGEPRYASDYFDQLYGYAVELIEKGLAYVDELSPEEMREYRGTLTEAGKNSPYRERSVAENLALFEKMRNGEFAEGKACLRAKIDMASPFMVMRDPVIYRVKFASHHQTGDKWCIYPMYDFTHCISDAIERITHSLCTLEFQDNRRLYDWVLEHISIERPLPHQYEFSRLNLEGTLTSKRKLLKLVEEGAVDGWDDPRMPTISGLRRRGYTPASLREFCRRIGVTKQDNVVEFSALESCIRDDLNINAPRAMAVINPLKVIIENFETPETLTMPNHPNREEMGTRQVQLTKELYIDQADFREEANKQYKRLVLGKEVRLRNAYIIKAERVEKDAEGNIVCVYCSYDPETLGKNPSDGRKVKGVIQWVSATDCLPAEFRQYSRLFTMPNPGSEEDIIAAINPQSLVVRQGFVERSVANALSEKAYQFEREGYYCADSKDSRPDHLVFNLTVSLKEGF.

The 'HIGH' region signature appears at 44-54; the sequence is PEPNGYLHIGH. Residues 45 to 47 and 51 to 57 contribute to the ATP site; these read EPN and HIGHAKS. Residues Asp77 and Tyr222 each coordinate L-glutamine. ATP is bound by residues Thr241 and 272–273; that span reads RL. The short motif at 279 to 283 is the 'KMSKS' region element; the sequence is LTSKR.

It belongs to the class-I aminoacyl-tRNA synthetase family. In terms of assembly, monomer.

It is found in the cytoplasm. The enzyme catalyses tRNA(Gln) + L-glutamine + ATP = L-glutaminyl-tRNA(Gln) + AMP + diphosphate. This Actinobacillus succinogenes (strain ATCC 55618 / DSM 22257 / CCUG 43843 / 130Z) protein is Glutamine--tRNA ligase.